Consider the following 1025-residue polypeptide: Leucyl-cystinyl aminopeptidase (1025 aa).

M1 is subject to N-acetylmethionine. The Cytoplasmic segment spans residues 1 to 109 (MESFTNDRLQ…DGTCSLPSAR (109 aa)). Positions 53-54 (LL) match the Dileucine internalization motif motif. Position 70 is a phosphotyrosine (Y70). The Dileucine internalization motif motif lies at 76-77 (LL). 2 positions are modified to phosphoserine: S80 and S91. A tankyrase binding region spans residues 96–101 (RQSPDG). A helical; Signal-anchor for type II membrane protein transmembrane segment spans residues 110–131 (TLVICVFVIVVAVSVIMVIYLL). Residues 132 to 1025 (PRCTFTKEGC…RNLKTLSQWL (894 aa)) are Extracellular-facing. 5 N-linked (GlcNAc...) asparagine glycosylation sites follow: N145, N184, N215, N256, and N266. E295 contributes to the substrate binding site. N368 and N374 each carry an N-linked (GlcNAc...) asparagine glycan. 428-432 (GAMEN) contacts substrate. N-linked (GlcNAc...) asparagine glycosylation occurs at N447. H464 is a binding site for Zn(2+). Catalysis depends on E465, which acts as the Proton acceptor. Residues H468 and E487 each contribute to the Zn(2+) site. Residues N525, N578, N664, N682, N695, N758, N834, N850, and N989 are each glycosylated (N-linked (GlcNAc...) asparagine).

The protein belongs to the peptidase M1 family. In terms of assembly, homodimer. Binds tankyrases 1 and 2. Zn(2+) serves as cofactor.

It localises to the cell membrane. The protein localises to the endomembrane system. It carries out the reaction Release of an N-terminal amino acid, Cys-|-Xaa-, in which the half-cystine residue is involved in a disulfide loop, notably in oxytocin or vasopressin. Hydrolysis rates on a range of aminoacyl arylamides exceed that for the cystinyl derivative, however.. Release of an N-terminal amino acid, cleave before cysteine, leucine as well as other amino acids. Degrades peptide hormones such as oxytocin, vasopressin and angiotensin III, and plays a role in maintaining homeostasis during pregnancy. May be involved in the inactivation of neuronal peptides in the brain. Cleaves Met-enkephalin and dynorphin. Binds angiotensin IV and may be the angiotensin IV receptor in the brain. This Mus musculus (Mouse) protein is Leucyl-cystinyl aminopeptidase (Lnpep).